The following is a 165-amino-acid chain: Nascent polypeptide-associated complex subunit beta (165 aa).

Disordered stretches follow at residues 1–34 (MDQAKLARMQASVRIGGKGTPRRKVKKVHKTSGA) and 133–165 (QNMQKNQAGEKKDDDEDDIPDLVEGENFEKSVD). A compositionally biased stretch (basic residues) spans 20–30 (TPRRKVKKVHK). An NAC-A/B domain is found at 33–110 (GADDKKLQAT…GEEKELTELV (78 aa)). Residues 145-158 (DDDEDDIPDLVEGE) show a composition bias toward acidic residues.

The protein belongs to the NAC-beta family. Part of the nascent polypeptide-associated complex (NAC), consisting of egd2 and egd1. NAC associates with ribosomes via egd1.

Its subcellular location is the cytoplasm. The protein resides in the nucleus. Component of the nascent polypeptide-associated complex (NAC), a dynamic component of the ribosomal exit tunnel, protecting the emerging polypeptides from interaction with other cytoplasmic proteins to ensure appropriate nascent protein targeting. The NAC complex also promotes mitochondrial protein import by enhancing productive ribosome interactions with the outer mitochondrial membrane and blocks the inappropriate interaction of ribosomes translating non-secretory nascent polypeptides with translocation sites in the membrane of the endoplasmic reticulum. EGD1 may act as a transcription factor that exert a negative effect on the expression of several genes that are transcribed by RNA polymerase II. The chain is Nascent polypeptide-associated complex subunit beta (egd1) from Emericella nidulans (strain FGSC A4 / ATCC 38163 / CBS 112.46 / NRRL 194 / M139) (Aspergillus nidulans).